Consider the following 176-residue polypeptide: Crossover junction endodeoxyribonuclease RuvC (176 aa).

Active-site residues include D9, E69, and D141. Residues D9, E69, and D141 each contribute to the Mg(2+) site.

This sequence belongs to the RuvC family. Homodimer which binds Holliday junction (HJ) DNA. The HJ becomes 2-fold symmetrical on binding to RuvC with unstacked arms; it has a different conformation from HJ DNA in complex with RuvA. In the full resolvosome a probable DNA-RuvA(4)-RuvB(12)-RuvC(2) complex forms which resolves the HJ. Mg(2+) is required as a cofactor.

The protein resides in the cytoplasm. It catalyses the reaction Endonucleolytic cleavage at a junction such as a reciprocal single-stranded crossover between two homologous DNA duplexes (Holliday junction).. Functionally, the RuvA-RuvB-RuvC complex processes Holliday junction (HJ) DNA during genetic recombination and DNA repair. Endonuclease that resolves HJ intermediates. Cleaves cruciform DNA by making single-stranded nicks across the HJ at symmetrical positions within the homologous arms, yielding a 5'-phosphate and a 3'-hydroxyl group; requires a central core of homology in the junction. The consensus cleavage sequence is 5'-(A/T)TT(C/G)-3'. Cleavage occurs on the 3'-side of the TT dinucleotide at the point of strand exchange. HJ branch migration catalyzed by RuvA-RuvB allows RuvC to scan DNA until it finds its consensus sequence, where it cleaves and resolves the cruciform DNA. This is Crossover junction endodeoxyribonuclease RuvC from Chromobacterium violaceum (strain ATCC 12472 / DSM 30191 / JCM 1249 / CCUG 213 / NBRC 12614 / NCIMB 9131 / NCTC 9757 / MK).